Consider the following 291-residue polypeptide: Acetylglutamate kinase (291 aa).

Residues 65-66, Arg-87, and Asn-186 contribute to the substrate site; that span reads GG.

This sequence belongs to the acetylglutamate kinase family. ArgB subfamily.

It is found in the cytoplasm. It catalyses the reaction N-acetyl-L-glutamate + ATP = N-acetyl-L-glutamyl 5-phosphate + ADP. It participates in amino-acid biosynthesis; L-arginine biosynthesis; N(2)-acetyl-L-ornithine from L-glutamate: step 2/4. Catalyzes the ATP-dependent phosphorylation of N-acetyl-L-glutamate. The chain is Acetylglutamate kinase from Mycolicibacterium vanbaalenii (strain DSM 7251 / JCM 13017 / BCRC 16820 / KCTC 9966 / NRRL B-24157 / PYR-1) (Mycobacterium vanbaalenii).